We begin with the raw amino-acid sequence, 434 residues long: Histidinol dehydrogenase (434 aa).

Tyrosine 130, glutamine 191, and asparagine 214 together coordinate NAD(+). The substrate site is built by serine 237, glutamine 259, and histidine 262. Zn(2+) contacts are provided by glutamine 259 and histidine 262. Active-site proton acceptor residues include glutamate 328 and histidine 329. Residues histidine 329, aspartate 362, glutamate 416, and histidine 421 each coordinate substrate. Residue aspartate 362 participates in Zn(2+) binding. Residue histidine 421 participates in Zn(2+) binding.

The protein belongs to the histidinol dehydrogenase family. It depends on Zn(2+) as a cofactor.

It catalyses the reaction L-histidinol + 2 NAD(+) + H2O = L-histidine + 2 NADH + 3 H(+). It functions in the pathway amino-acid biosynthesis; L-histidine biosynthesis; L-histidine from 5-phospho-alpha-D-ribose 1-diphosphate: step 9/9. Functionally, catalyzes the sequential NAD-dependent oxidations of L-histidinol to L-histidinaldehyde and then to L-histidine. The sequence is that of Histidinol dehydrogenase from Rhodospirillum rubrum (strain ATCC 11170 / ATH 1.1.1 / DSM 467 / LMG 4362 / NCIMB 8255 / S1).